The following is a 361-amino-acid chain: Probable galacturonosyltransferase-like 7 (361 aa).

The chain crosses the membrane as a helical; Signal-anchor for type II membrane protein span at residues 1–21 (MLWIMRFSGLFSAALVIIVLS). Residues 22-361 (PSLQSFPPAE…PYDLYGHYSR (340 aa)) are Lumenal-facing. N-linked (GlcNAc...) asparagine glycosylation is present at asparagine 217.

Belongs to the glycosyltransferase 8 family.

The protein resides in the golgi apparatus membrane. It functions in the pathway glycan metabolism; pectin biosynthesis. May be involved in pectin and/or xylans biosynthesis in cell walls. The sequence is that of Probable galacturonosyltransferase-like 7 (GATL7) from Arabidopsis thaliana (Mouse-ear cress).